Here is a 451-residue protein sequence, read N- to C-terminus: Chromosomal replication initiator protein DnaA (451 aa).

A domain I, interacts with DnaA modulators region spans residues 1–101; that stretch reads MTENETIFWN…TSNHIFSRQT (101 aa). Residues 101–110 are domain II; that stretch reads TINSLPAITS. The interval 111–329 is domain III, AAA+ region; that stretch reads DLNPKYSFDN…GALKDISLVA (219 aa). 4 residues coordinate ATP: Gly-155, Gly-157, Lys-158, and Thr-159. Positions 330–451 are domain IV, binds dsDNA; sequence NFKEIDKITV…EIETIKNKIK (122 aa).

This sequence belongs to the DnaA family. In terms of assembly, oligomerizes as a right-handed, spiral filament on DNA at oriC.

Its subcellular location is the cytoplasm. Functionally, plays an essential role in the initiation and regulation of chromosomal replication. ATP-DnaA binds to the origin of replication (oriC) to initiate formation of the DNA replication initiation complex once per cell cycle. Binds the DnaA box (a 9 base pair repeat at the origin) and separates the double-stranded (ds)DNA. Forms a right-handed helical filament on oriC DNA; dsDNA binds to the exterior of the filament while single-stranded (ss)DNA is stabiized in the filament's interior. The ATP-DnaA-oriC complex binds and stabilizes one strand of the AT-rich DNA unwinding element (DUE), permitting loading of DNA polymerase. After initiation quickly degrades to an ADP-DnaA complex that is not apt for DNA replication. Binds acidic phospholipids. This chain is Chromosomal replication initiator protein DnaA, found in Streptococcus uberis (strain ATCC BAA-854 / 0140J).